Reading from the N-terminus, the 469-residue chain is Small ribosomal subunit protein mS29 (469 aa).

Position 150 (Leu-150) interacts with ATP.

This sequence belongs to the mitochondrion-specific ribosomal protein mS29 family. As to quaternary structure, component of the mitochondrial small ribosomal subunit (mt-SSU). Mature N.crassa 74S mitochondrial ribosomes consist of a small (37S) and a large (54S) subunit. The 37S small subunit contains a 16S ribosomal RNA (16S mt-rRNA) and 32 different proteins. The 54S large subunit contains a 23S rRNA (23S mt-rRNA) and 42 different proteins.

Its subcellular location is the mitochondrion. Its function is as follows. Component of the mitochondrial ribosome (mitoribosome), a dedicated translation machinery responsible for the synthesis of mitochondrial genome-encoded proteins, including at least some of the essential transmembrane subunits of the mitochondrial respiratory chain. The mitoribosomes are attached to the mitochondrial inner membrane and translation products are cotranslationally integrated into the membrane. The polypeptide is Small ribosomal subunit protein mS29 (rsm23) (Neurospora crassa (strain ATCC 24698 / 74-OR23-1A / CBS 708.71 / DSM 1257 / FGSC 987)).